Consider the following 145-residue polypeptide: Leptin (145 aa).

The signal sequence occupies residues 1-12 (LWLWPYLFFIEA).

Belongs to the leptin family.

Its subcellular location is the secreted. In terms of biological role, key player in the regulation of energy balance and body weight control. Once released into the circulation, has central and peripheral effects by binding LEPR, found in many tissues, which results in the activation of several major signaling pathways. In the hypothalamus, acts as an appetite-regulating factor that induces a decrease in food intake and an increase in energy consumption by inducing anorexinogenic factors and suppressing orexigenic neuropeptides, also regulates bone mass and secretion of hypothalamo-pituitary-adrenal hormones. In the periphery, increases basal metabolism, influences reproductive function, regulates pancreatic beta-cell function and insulin secretion, is pro-angiogenic for endothelial cell and affects innate and adaptive immunity. In the arcuate nucleus of the hypothalamus, activates by depolarization POMC neurons inducing FOS and SOCS3 expression to release anorexigenic peptides and inhibits by hyperpolarization NPY neurons inducing SOCS3 with a consequent reduction on release of orexigenic peptides. In addition to its known satiety inducing effect, has a modulatory role in nutrient absorption. In the intestine, reduces glucose absorption by enterocytes by activating PKC and leading to a sequential activation of p38, PI3K and ERK signaling pathways which exerts an inhibitory effect on glucose absorption. Acts as a growth factor on certain tissues, through the activation of different signaling pathways increases expression of genes involved in cell cycle regulation such as CCND1, via JAK2-STAT3 pathway, or VEGFA, via MAPK1/3 and PI3K-AKT1 pathways. May also play an apoptotic role via JAK2-STAT3 pathway and up-regulation of BIRC5 expression. Pro-angiogenic, has mitogenic activity on vascular endothelial cells and plays a role in matrix remodeling by regulating the expression of matrix metalloproteinases (MMPs) and tissue inhibitors of metalloproteinases (TIMPs). In innate immunity, modulates the activity and function of neutrophils by increasing chemotaxis and the secretion of oxygen radicals. Increases phagocytosis by macrophages and enhances secretion of pro-inflammatory mediators. Increases cytotoxic ability of NK cells. Plays a pro-inflammatory role, in synergy with IL1B, by inducing NOS2 which promotes the production of IL6, IL8 and Prostaglandin E2, through a signaling pathway that involves JAK2, PI3K, MAP2K1/MEK1 and MAPK14/p38. In adaptive immunity, promotes the switch of memory T-cells towards T helper-1 cell immune responses. Increases CD4(+)CD25(-) T-cell proliferation and reduces autophagy during TCR (T-cell receptor) stimulation, through MTOR signaling pathway activation and BCL2 up-regulation. The protein is Leptin (LEP) of Equus caballus (Horse).